The sequence spans 461 residues: Secreted 45 kDa protein (461 aa).

An N-terminal signal peptide occupies residues 1 to 27 (MKKKIISAILMSTVILSAAAPLSGVYA). The segment covering 264-329 (SSASASSSQA…GNTNSGTSTG (66 aa)) has biased composition (low complexity). A disordered region spans residues 264–343 (SSASASSSQA…TTTGGSGINS (80 aa)). Gly residues predominate over residues 330 to 340 (NTGGTTTGGSG). The Peptidase C51 domain maps to 330 to 459 (NTGGTTTGGS…VSASGVTFLM (130 aa)).

This chain is Secreted 45 kDa protein (usp45), found in Lactococcus lactis subsp. cremoris (strain MG1363).